The following is a 368-amino-acid chain: N-acetylneuraminate epimerase (368 aa).

The N-terminal stretch at 1–19 (MNKTITALAIMMASFAANA) is a signal peptide. Kelch repeat units lie at residues 40-84 (TVYI…AFID), 86-137 (NLYV…FVHN), 139-173 (KAYVTGGVNQNIFNGYFEDLNEAGKDSATIDKINA), 174-219 (HYFD…VNKG), 222-265 (TWLI…VAGG), 287-336 (ENYQ…PWNN), and 338-367 (LLIIGGETAGGKAVTDSVLISVKDNKVTVQ). Glu-228 functions as the Proton acceptor in the catalytic mechanism.

It belongs to the NanM family. Homodimer.

It localises to the periplasm. It catalyses the reaction N-acetyl-alpha-neuraminate = N-acetyl-beta-neuraminate. Converts alpha-N-acetylneuranimic acid (Neu5Ac) to the beta-anomer, accelerating the equilibrium between the alpha- and beta-anomers. Probably facilitates sialidase-negative bacteria to compete successfully for limited amounts of extracellular Neu5Ac, which is likely taken up in the beta-anomer. In addition, the rapid removal of sialic acid from solution might be advantageous to the bacterium to damp down host responses. The sequence is that of N-acetylneuraminate epimerase from Escherichia coli O9:H4 (strain HS).